A 426-amino-acid chain; its full sequence is Dihydroorotase (426 aa).

His-62 and His-64 together coordinate Zn(2+). Substrate contacts are provided by residues 64–66 (HLR) and Asn-96. Asp-154, His-181, and His-234 together coordinate Zn(2+). Asn-280 lines the substrate pocket. Asp-307 serves as a coordination point for Zn(2+). Asp-307 is an active-site residue. Residues His-311 and 325-326 (FG) each bind substrate.

It belongs to the metallo-dependent hydrolases superfamily. DHOase family. Class I DHOase subfamily. Zn(2+) is required as a cofactor.

The catalysed reaction is (S)-dihydroorotate + H2O = N-carbamoyl-L-aspartate + H(+). Its pathway is pyrimidine metabolism; UMP biosynthesis via de novo pathway; (S)-dihydroorotate from bicarbonate: step 3/3. Catalyzes the reversible cyclization of carbamoyl aspartate to dihydroorotate. In Desulforapulum autotrophicum (strain ATCC 43914 / DSM 3382 / VKM B-1955 / HRM2) (Desulfobacterium autotrophicum), this protein is Dihydroorotase.